Here is a 667-residue protein sequence, read N- to C-terminus: UvrABC system protein B (667 aa).

Residues 24–195 (EGLRRGDRFQ…SSGGVFHLRG (172 aa)) enclose the Helicase ATP-binding domain. 37-44 (GVTGSGKT) serves as a coordination point for ATP. Residues 90–113 (YYDYYQPEAYIPTKDLYIEKDADI) carry the Beta-hairpin motif. Positions 428 to 581 (QVDDFIEEVQ…QLMYNIEHDI (154 aa)) constitute a Helicase C-terminal domain. The UVR domain maps to 626 to 661 (EEYLALLEEEMWRASSELRYEDAAMLRDEMLRIKRE).

This sequence belongs to the UvrB family. Forms a heterotetramer with UvrA during the search for lesions. Interacts with UvrC in an incision complex.

The protein localises to the cytoplasm. Functionally, the UvrABC repair system catalyzes the recognition and processing of DNA lesions. A damage recognition complex composed of 2 UvrA and 2 UvrB subunits scans DNA for abnormalities. Upon binding of the UvrA(2)B(2) complex to a putative damaged site, the DNA wraps around one UvrB monomer. DNA wrap is dependent on ATP binding by UvrB and probably causes local melting of the DNA helix, facilitating insertion of UvrB beta-hairpin between the DNA strands. Then UvrB probes one DNA strand for the presence of a lesion. If a lesion is found the UvrA subunits dissociate and the UvrB-DNA preincision complex is formed. This complex is subsequently bound by UvrC and the second UvrB is released. If no lesion is found, the DNA wraps around the other UvrB subunit that will check the other stand for damage. The polypeptide is UvrABC system protein B (Kosmotoga olearia (strain ATCC BAA-1733 / DSM 21960 / TBF 19.5.1)).